Consider the following 861-residue polypeptide: E3 ubiquitin-protein ligase HECTD3 (861 aa).

An N-acetylalanine modification is found at alanine 2. The residue at position 12 (serine 12) is a Phosphoserine. One can recognise a DOC domain in the interval 219 to 397 (DEDLIHFLYD…ASLVRYPRLE (179 aa)). An HECT domain is found at 512 to 857 (YEKPLDYRWP…NCVAIDTDMS (346 aa)). The active-site Glycyl thioester intermediate is cysteine 823.

Interacts with TRIOBP. Interacts with STX8.

It is found in the cytoplasm. It localises to the perinuclear region. The enzyme catalyses S-ubiquitinyl-[E2 ubiquitin-conjugating enzyme]-L-cysteine + [acceptor protein]-L-lysine = [E2 ubiquitin-conjugating enzyme]-L-cysteine + N(6)-ubiquitinyl-[acceptor protein]-L-lysine.. It participates in protein modification; protein ubiquitination. Functionally, E3 ubiquitin ligases accepts ubiquitin from an E2 ubiquitin-conjugating enzyme in the form of a thioester and then directly transfers the ubiquitin to targeted substrates. Mediates ubiquitination of TRIOBP and its subsequent proteasomal degradation, thus facilitating cell cycle progression by regulating the turn-over of TRIOBP. Also mediates ubiquitination of STX8. The sequence is that of E3 ubiquitin-protein ligase HECTD3 (Hectd3) from Mus musculus (Mouse).